Here is a 356-residue protein sequence, read N- to C-terminus: Glycerol-1-phosphate dehydrogenase [NAD(P)+] (356 aa).

NAD(+)-binding positions include 103–107 (GRSID) and 125–128 (TAAS). Position 130 (Asp130) interacts with substrate. Ser134 contributes to the NAD(+) binding site. Asp177 provides a ligand contact to substrate. Residues Asp177 and His257 each coordinate Zn(2+). His261 contributes to the substrate binding site. Residue His273 participates in Zn(2+) binding.

The protein belongs to the glycerol-1-phosphate dehydrogenase family. Zn(2+) serves as cofactor.

Its subcellular location is the cytoplasm. It catalyses the reaction sn-glycerol 1-phosphate + NAD(+) = dihydroxyacetone phosphate + NADH + H(+). It carries out the reaction sn-glycerol 1-phosphate + NADP(+) = dihydroxyacetone phosphate + NADPH + H(+). Its pathway is membrane lipid metabolism; glycerophospholipid metabolism. Its function is as follows. Catalyzes the NAD(P)H-dependent reduction of dihydroxyacetonephosphate (DHAP or glycerone phosphate) to glycerol 1-phosphate (G1P). The G1P thus generated is used as the glycerophosphate backbone of phospholipids in the cellular membranes of Archaea. This chain is Glycerol-1-phosphate dehydrogenase [NAD(P)+], found in Methanosarcina mazei (strain ATCC BAA-159 / DSM 3647 / Goe1 / Go1 / JCM 11833 / OCM 88) (Methanosarcina frisia).